The primary structure comprises 179 residues: Large ribosomal subunit protein uL6 (179 aa).

It belongs to the universal ribosomal protein uL6 family. In terms of assembly, part of the 50S ribosomal subunit.

In terms of biological role, this protein binds to the 23S rRNA, and is important in its secondary structure. It is located near the subunit interface in the base of the L7/L12 stalk, and near the tRNA binding site of the peptidyltransferase center. This is Large ribosomal subunit protein uL6 from Syntrophus aciditrophicus (strain SB).